The chain runs to 320 residues: o-succinylbenzoate synthase (320 aa).

The active-site Proton donor is the Lys-133. The Mg(2+) site is built by Asp-161, Glu-190, and Asp-213. The active-site Proton acceptor is Lys-235.

Belongs to the mandelate racemase/muconate lactonizing enzyme family. MenC type 1 subfamily. A divalent metal cation is required as a cofactor.

The catalysed reaction is (1R,6R)-6-hydroxy-2-succinyl-cyclohexa-2,4-diene-1-carboxylate = 2-succinylbenzoate + H2O. It participates in quinol/quinone metabolism; 1,4-dihydroxy-2-naphthoate biosynthesis; 1,4-dihydroxy-2-naphthoate from chorismate: step 4/7. It functions in the pathway quinol/quinone metabolism; menaquinone biosynthesis. Its function is as follows. Converts 2-succinyl-6-hydroxy-2,4-cyclohexadiene-1-carboxylate (SHCHC) to 2-succinylbenzoate (OSB). The protein is o-succinylbenzoate synthase of Salmonella typhi.